The sequence spans 953 residues: Isoleucine--tRNA ligase (953 aa).

A 'HIGH' region motif is present at residues 57-67 (PYANGDIHIGH). E582 contributes to the L-isoleucyl-5'-AMP binding site. A 'KMSKS' region motif is present at residues 623-627 (KMSKS). K626 contacts ATP. Residues C916, C919, C936, and C939 each contribute to the Zn(2+) site.

It belongs to the class-I aminoacyl-tRNA synthetase family. IleS type 1 subfamily. As to quaternary structure, monomer. The cofactor is Zn(2+).

Its subcellular location is the cytoplasm. The enzyme catalyses tRNA(Ile) + L-isoleucine + ATP = L-isoleucyl-tRNA(Ile) + AMP + diphosphate. Functionally, catalyzes the attachment of isoleucine to tRNA(Ile). As IleRS can inadvertently accommodate and process structurally similar amino acids such as valine, to avoid such errors it has two additional distinct tRNA(Ile)-dependent editing activities. One activity is designated as 'pretransfer' editing and involves the hydrolysis of activated Val-AMP. The other activity is designated 'posttransfer' editing and involves deacylation of mischarged Val-tRNA(Ile). This chain is Isoleucine--tRNA ligase, found in Bordetella pertussis (strain Tohama I / ATCC BAA-589 / NCTC 13251).